Reading from the N-terminus, the 252-residue chain is MIRPGRCLWQPCLSGRKRSRPSGPVSRHGMMAAMTAPTAAAIRPVQALLVVDVQAAFVSGWEAVPDADRVLRCTRDLLSRARAAGALVVHLQNDGEPGAVDAPHTPGWELHLPVEPGPRERVVRKTEDDGFADTPLGDLLTDAGVTELAVCGVLSEMCVAATARTALVRGHRVVLPHDAHATYDIPAAPGISDTVPAAMSSRAAEWALGDEVEIVPHAAAVPFAAAPRPAVGPAAAPGLPVSPAAPPPSPVR.

Catalysis depends on cysteine 158, which acts as the Nucleophile. A compositionally biased stretch (low complexity) spans 230–242; it reads AVGPAAAPGLPVS. The tract at residues 230–252 is disordered; that stretch reads AVGPAAAPGLPVSPAAPPPSPVR. A compositionally biased stretch (pro residues) spans 243-252; sequence PAAPPPSPVR.

The protein belongs to the isochorismatase family.

It catalyses the reaction streptothricin F + H2O = streptothricin F acid. Functionally, catalyzes the hydrolysis of the amide bond of streptolidine lactam, thereby conferring streptothricin (ST) resistance. Can hydrolyze streptothricin-F and streptothricin-D. However, this strain is believed to be a ST nonproducer, which raises the possibility that its true role may not be its involvement in self-resistance to STs. May catalyze the hydrolysis of naturally occurring cyclic amide compounds that are structurally related to STs. In Streptomyces noursei (Streptomyces albulus), this protein is Streptothricin hydrolase (sttH).